The chain runs to 150 residues: Transcriptional repressor NrdR (150 aa).

A zinc finger spans residues 3-34 (CPYCQFEDTRVIDSRLASEGEQVRRRRECNRC). One can recognise an ATP-cone domain in the interval 49–139 (PRIVKRDGTR…VYRSFEDVSA (91 aa)).

This sequence belongs to the NrdR family. It depends on Zn(2+) as a cofactor.

Negatively regulates transcription of bacterial ribonucleotide reductase nrd genes and operons by binding to NrdR-boxes. The chain is Transcriptional repressor NrdR from Alkalilimnicola ehrlichii (strain ATCC BAA-1101 / DSM 17681 / MLHE-1).